A 159-amino-acid chain; its full sequence is Ribosomal RNA large subunit methyltransferase H (159 aa).

S-adenosyl-L-methionine-binding positions include Leu-76, Gly-108, and 127–132 (FSRMTF).

It belongs to the RNA methyltransferase RlmH family. In terms of assembly, homodimer.

The protein resides in the cytoplasm. It catalyses the reaction pseudouridine(1915) in 23S rRNA + S-adenosyl-L-methionine = N(3)-methylpseudouridine(1915) in 23S rRNA + S-adenosyl-L-homocysteine + H(+). Specifically methylates the pseudouridine at position 1915 (m3Psi1915) in 23S rRNA. The protein is Ribosomal RNA large subunit methyltransferase H of Bacillus pumilus (strain SAFR-032).